The chain runs to 664 residues: Macoilin (664 aa).

The next 4 helical transmembrane spans lie at 28 to 48 (TFLYLKFLVVWALVLLADFVL), 75 to 95 (AFSVFFVCVAFTSNIICLLFI), 120 to 140 (VCLPTVSLWILFVYIEAAIRF), and 154 to 174 (FAAHCIGYPVVTLGFGFKSYV). Over residues 253–265 (REKGKEKDKDAKK) the composition is skewed to basic and acidic residues. Residues 253–274 (REKGKEKDKDAKKHNLGINNNN) form a disordered region. Serine 305 carries the phosphoserine modification. Positions 320–348 (KNYKNASGVVNSSPRSHSATNGSIPSSSS) are enriched in polar residues. Positions 320-375 (KNYKNASGVVNSSPRSHSATNGSIPSSSSKNEKKQKCTSKGPSAHKDLMENCIPNN) are disordered. The N-linked (GlcNAc...) asparagine glycan is linked to asparagine 324. Serine 332 carries the phosphoserine modification. N-linked (GlcNAc...) asparagine glycans are attached at residues asparagine 340 and asparagine 452. Positions 630 to 664 (TSPLSPVSPHYSSKFVETSPSGLDPNASVYQPLKK) are disordered. Phosphoserine is present on residues serine 631 and serine 634. N-linked (GlcNAc...) asparagine glycosylation is present at asparagine 655.

The protein belongs to the macoilin family. Strong expression in whole nervous system up to 12.5 dpc. Highly expressed in all neuronal differentiation fields from 14.5 dpc to birth, with highest expression in the telencephalic cortical plate and mitral cells in the olfactory bulb, and lower expression in neuronal progenitor zones. Progressively decreased expression in fields of neuron precursor proliferation from 14.5 dpc and virtually undetectable there by 17.5 dpc. No significant expression detected outside the nervous system. After birth, significant expression remains in the cerebellum, olfactory bulb and hippocampus.

It is found in the rough endoplasmic reticulum membrane. The protein localises to the nucleus membrane. In terms of biological role, plays a role in the regulation of neuronal activity. The protein is Macoilin (Maco1) of Mus musculus (Mouse).